A 302-amino-acid polypeptide reads, in one-letter code: Sulfate adenylyltransferase subunit 2 (302 aa).

It belongs to the PAPS reductase family. CysD subfamily. As to quaternary structure, heterodimer composed of CysD, the smaller subunit, and CysN.

The catalysed reaction is sulfate + ATP + H(+) = adenosine 5'-phosphosulfate + diphosphate. It participates in sulfur metabolism; hydrogen sulfide biosynthesis; sulfite from sulfate: step 1/3. In terms of biological role, with CysN forms the ATP sulfurylase (ATPS) that catalyzes the adenylation of sulfate producing adenosine 5'-phosphosulfate (APS) and diphosphate, the first enzymatic step in sulfur assimilation pathway. APS synthesis involves the formation of a high-energy phosphoric-sulfuric acid anhydride bond driven by GTP hydrolysis by CysN coupled to ATP hydrolysis by CysD. In Escherichia coli O6:K15:H31 (strain 536 / UPEC), this protein is Sulfate adenylyltransferase subunit 2.